A 498-amino-acid polypeptide reads, in one-letter code: Protein spinster homolog 3 (498 aa).

12 consecutive transmembrane segments (helical) span residues 49 to 71, 87 to 107, 114 to 134, 148 to 168, 175 to 195, 207 to 227, 260 to 280, 309 to 329, 343 to 363, 373 to 393, 407 to 427, and 451 to 471; these read IAVA…IAGV, GLLQ…FGYL, KLIM…SSFV, LVGT…GDLF, LMIS…YIIG, WALR…VFLI, FVWS…LAFW, YIFG…GTCI, LICA…IVLA, FIAI…DILL, LQIM…IGAI, and LLCP…SLYI.

It belongs to the major facilitator superfamily. Spinster (TC 2.A.1.49) family.

The protein resides in the membrane. Sphingolipid transporter. The protein is Protein spinster homolog 3 (spns3) of Danio rerio (Zebrafish).